We begin with the raw amino-acid sequence, 233 residues long: Large ribosomal subunit protein uL1 (233 aa).

This sequence belongs to the universal ribosomal protein uL1 family. Part of the 50S ribosomal subunit.

In terms of biological role, binds directly to 23S rRNA. The L1 stalk is quite mobile in the ribosome, and is involved in E site tRNA release. Its function is as follows. Protein L1 is also a translational repressor protein, it controls the translation of the L11 operon by binding to its mRNA. In Trichlorobacter lovleyi (strain ATCC BAA-1151 / DSM 17278 / SZ) (Geobacter lovleyi), this protein is Large ribosomal subunit protein uL1.